Here is a 359-residue protein sequence, read N- to C-terminus: Aminoacyl tRNA synthase complex-interacting multifunctional protein 1 (359 aa).

A required for fibroblast proliferation region spans residues 52 to 92 (AVLKRLEQKGAEADQIIEYLKQQVALLKEKAVLQATLREEK). The tract at residues 100–241 (KLKKEIEELK…APRTVISGLV (142 aa)) is interaction with HSP90B1. The tract at residues 149–163 (SVSTISCSIKEHSKG) is required for endothelial cell death. Positions 156-196 (SIKEHSKGGGEEKKVKEKTDKKGEKKEKKLQSAAPSADSKP) are disordered. Residues 157–185 (IKEHSKGGGEEKKVKEKTDKKGEKKEKKL) are compositionally biased toward basic and acidic residues. The segment at 163-239 (GGGEEKKVKE…EAAPRTVISG (77 aa)) is required for endothelial cell migration. K184 is covalently cross-linked (Glycyl lysine isopeptide (Lys-Gly) (interchain with G-Cter in SUMO1)). A Phosphoserine modification is found at S187. The region spanning 198-299 (DVSRLDLRIG…NGSVPGDRIT (102 aa)) is the tRNA-binding domain. K316 bears the N6-succinyllysine mark.

As to quaternary structure, homodimer. Part of the multisynthetase complex (MSC), a multisubunit complex that groups tRNA ligases for Arg (RARS1), Asp (DARS1), Gln (QARS1), Ile (IARS1), Leu (LARS1), Lys (KARS1), Met (MARS1) the bifunctional ligase for Glu and Pro (EPRS1) and the auxiliary subunits AIMP1/p43, AIMP2/p38 and EEF1E1/p18. Interacts (via N-terminus) with RARS1 (via N-terminus). Part of a complex composed of RARS1, QARS1 and AIMP1. Interacts (via C-terminus) with SMURF2. Interacts (via N-terminus) with HSP90B1/gp96 (via C-terminus). Interacts with PSMA7. Interacts with TARS3. Cleaved by caspase-7 in response to apoptosis to produce EMAP-II.

The protein resides in the nucleus. Its subcellular location is the cytoplasm. It is found in the cytosol. The protein localises to the secreted. It localises to the endoplasmic reticulum. The protein resides in the golgi apparatus. Non-catalytic component of the multisynthase complex. Stimulates the catalytic activity of cytoplasmic arginyl-tRNA synthase. Binds tRNA. Possesses inflammatory cytokine activity. Negatively regulates TGF-beta signaling through stabilization of SMURF2 by binding to SMURF2 and inhibiting its SMAD7-mediated degradation. Involved in glucose homeostasis through induction of glucagon secretion at low glucose levels. Promotes dermal fibroblast proliferation and wound repair. Regulates KDELR1-mediated retention of HSP90B1/gp96 in the endoplasmic reticulum. Plays a role in angiogenesis by inducing endothelial cell migration at low concentrations and endothelian cell apoptosis at high concentrations. Induces maturation of dendritic cells and monocyte cell adhesion. In Cricetulus griseus (Chinese hamster), this protein is Aminoacyl tRNA synthase complex-interacting multifunctional protein 1 (AIMP1).